The chain runs to 263 residues: 3-methyl-2-oxobutanoate hydroxymethyltransferase (263 aa).

D46 and D85 together coordinate Mg(2+). Residues 46 to 47 (DS), D85, and K115 contribute to the 3-methyl-2-oxobutanoate site. A Mg(2+)-binding site is contributed by E117. The active-site Proton acceptor is the E180.

It belongs to the PanB family. Homodecamer; pentamer of dimers. Requires Mg(2+) as cofactor.

The protein localises to the cytoplasm. It catalyses the reaction 3-methyl-2-oxobutanoate + (6R)-5,10-methylene-5,6,7,8-tetrahydrofolate + H2O = 2-dehydropantoate + (6S)-5,6,7,8-tetrahydrofolate. Its pathway is cofactor biosynthesis; (R)-pantothenate biosynthesis; (R)-pantoate from 3-methyl-2-oxobutanoate: step 1/2. In terms of biological role, catalyzes the reversible reaction in which hydroxymethyl group from 5,10-methylenetetrahydrofolate is transferred onto alpha-ketoisovalerate to form ketopantoate. This is 3-methyl-2-oxobutanoate hydroxymethyltransferase from Corynebacterium diphtheriae (strain ATCC 700971 / NCTC 13129 / Biotype gravis).